We begin with the raw amino-acid sequence, 349 residues long: UDP-3-O-acylglucosamine N-acyltransferase (349 aa).

The active-site Proton acceptor is H248.

This sequence belongs to the transferase hexapeptide repeat family. LpxD subfamily. In terms of assembly, homotrimer.

The enzyme catalyses a UDP-3-O-[(3R)-3-hydroxyacyl]-alpha-D-glucosamine + a (3R)-hydroxyacyl-[ACP] = a UDP-2-N,3-O-bis[(3R)-3-hydroxyacyl]-alpha-D-glucosamine + holo-[ACP] + H(+). Its pathway is bacterial outer membrane biogenesis; LPS lipid A biosynthesis. Catalyzes the N-acylation of UDP-3-O-acylglucosamine using 3-hydroxyacyl-ACP as the acyl donor. Is involved in the biosynthesis of lipid A, a phosphorylated glycolipid that anchors the lipopolysaccharide to the outer membrane of the cell. This Gloeothece citriformis (strain PCC 7424) (Cyanothece sp. (strain PCC 7424)) protein is UDP-3-O-acylglucosamine N-acyltransferase.